The chain runs to 598 residues: Chromodomain Y-like protein (598 aa).

Positions 1–76 (MTFQASHRSA…VDKRKNKKGK (76 aa)) are disordered. Over residues 44–56 (PSISVSSEQSGAQ) the composition is skewed to polar residues. The 61-residue stretch at 61 to 121 (LQVERIVDKR…RHTEKQKEST (61 aa)) folds into the Chromo domain. An interaction with EZH2 region spans residues 61–309 (LQVERIVDKR…NIQTSVTGVT (249 aa)). The segment covering 65 to 76 (RIVDKRKNKKGK) has biased composition (basic and acidic residues). S88 carries the post-translational modification Phosphoserine. The span at 112-121 (RHTEKQKEST) shows a compositional bias: basic and acidic residues. Residues 112–149 (RHTEKQKESTLTRTNRTSPNNARKQISRSTNSNFSKTS) are disordered. Positions 122–149 (LTRTNRTSPNNARKQISRSTNSNFSKTS) are enriched in polar residues. K135 carries the N6,N6,N6-trimethyllysine; by EHMT2; alternate modification. Position 135 is an N6,N6-dimethyllysine; by EHMT2; alternate (K135). At K135 the chain carries N6-methyllysine; by EHMT2; alternate. A phosphoserine mark is found at S170, S201, and S216. The interval 204-226 (KSRTAVDGFQSESPEKLDPVEQG) is disordered. The tract at residues 362-594 (SENNSLNPEV…DSMLKYLQRK (233 aa)) is acetyl-CoA-binding domain.

Forms multimers and multimerization is required for stable binding to chromatin. Interacts with HDAC1 and HDAC2 via its C-terminal acetyl-CoA-binding domain. Interacts with EZH2, EED, SUZ12, REST, EHMT1 and EHMT2. Part of a complex containing at least CDYL, REST, WIZ, SETB1, EHMT1 and EHMT2. Part of a complex containing at least CDYL, MIER1, MIER2, HDAC1 and HDAC2. Interacts with CHAF1A and CHAF1B; bridging the CAF-1 complex to the MCM2-7 (MCM) complex. Interacts with MCM3 and MCM5; bridging the CAF-1 complex to the MCM2-7 (MCM) complex. Recruited to Xist RNA-coated X chromosome. Interacts with EHMT2 and PRDM9; interaction only takes place when PRDM9 is bound to hotspot DNA. As to expression, expressed in the hippocampus with reduced expression in epileptic tissue compared to normal adjacent tissue (at protein level). Ubiquitous. Expressed at moderate levels in all tissues examined. Isoform 2: Most abundantly expressed isoform.

The protein resides in the nucleus. The protein localises to the chromosome. The enzyme catalyses 3-hydroxybutanoyl-CoA = (2E)-butenoyl-CoA + H2O. Functionally, chromatin reader protein that recognizes and binds histone H3 trimethylated at 'Lys-9', dimethylated at 'Lys-27' and trimethylated at 'Lys-27' (H3K9me3, H3K27me2 and H3K27me3, respectively). Part of multimeric repressive chromatin complexes, where it is required for transmission and restoration of repressive histone marks, thereby preserving the epigenetic landscape. Required for chromatin targeting and maximal enzymatic activity of Polycomb repressive complex 2 (PRC2); acts as a positive regulator of PRC2 activity by bridging the pre-existing histone H3K27me3 and newly recruited PRC2 on neighboring nucleosomes. Acts as a corepressor for REST by facilitating histone-lysine N-methyltransferase EHMT2 recruitment and H3K9 dimethylation at REST target genes for repression. Involved in X chromosome inactivation in females: recruited to Xist RNA-coated X chromosome and facilitates propagation of H3K9me2 by anchoring EHMT2. Promotes EZH2 accumulation and H3K27me3 methylation at DNA double strand breaks (DSBs), thereby facilitating transcriptional repression at sites of DNA damage and homology-directed repair of DSBs. Required for neuronal migration during brain development by repressing expression of RHOA. By repressing the expression of SCN8A, contributes to the inhibition of intrinsic neuronal excitability and epileptogenesis. In addition to acting as a chromatin reader, acts as a hydro-lyase. Shows crotonyl-coA hydratase activity by mediating the conversion of crotonyl-CoA ((2E)-butenoyl-CoA) to beta-hydroxybutyryl-CoA (3-hydroxybutanoyl-CoA), thereby acting as a negative regulator of histone crotonylation. Histone crotonylation is required during spermatogenesis; down-regulation of histone crotonylation by CDYL regulates the reactivation of sex chromosome-linked genes in round spermatids and histone replacement in elongating spermatids. By regulating histone crotonylation and trimethylation of H3K27, may be involved in stress-induced depression-like behaviors, possibly by regulating VGF expression. Its function is as follows. Not able to recognize and bind histone H3K9me3, histone H3K27me2 and histone H3K27me3, due to the presence of a N-terminal extension that inactivates the chromo domain. Not able to recognize and bind histone H3K9me3, histone H3K27me2 and histone H3K27me3, due to the absence of the chromo domain. Acts as a negative regulator of isoform 2 by displacing isoform 2 from chromatin. This Homo sapiens (Human) protein is Chromodomain Y-like protein.